Consider the following 189-residue polypeptide: Probable DNA-directed RNA polymerase subunit delta (189 aa).

Positions 14–81 (LSMIEVAHAI…GENVWALRTW (68 aa)) constitute an HTH HARE-type domain. Acidic residues-rich tracts occupy residues 90 to 100 (EVDHPEDDGDE) and 118 to 189 (EGDD…EDEE). Residues 90-189 (EVDHPEDDGD…DDLDDDEDEE (100 aa)) are disordered.

Belongs to the RpoE family. RNAP is composed of a core of 2 alpha, a beta and a beta' subunits. The core is associated with a delta subunit and one of several sigma factors.

In terms of biological role, participates in both the initiation and recycling phases of transcription. In the presence of the delta subunit, RNAP displays an increased specificity of transcription, a decreased affinity for nucleic acids, and an increased efficiency of RNA synthesis because of enhanced recycling. This Lactobacillus delbrueckii subsp. bulgaricus (strain ATCC BAA-365 / Lb-18) protein is Probable DNA-directed RNA polymerase subunit delta.